Here is a 194-residue protein sequence, read N- to C-terminus: Imidazoleglycerol-phosphate dehydratase (194 aa).

The protein belongs to the imidazoleglycerol-phosphate dehydratase family.

It is found in the cytoplasm. It carries out the reaction D-erythro-1-(imidazol-4-yl)glycerol 3-phosphate = 3-(imidazol-4-yl)-2-oxopropyl phosphate + H2O. The protein operates within amino-acid biosynthesis; L-histidine biosynthesis; L-histidine from 5-phospho-alpha-D-ribose 1-diphosphate: step 6/9. This is Imidazoleglycerol-phosphate dehydratase from Bacillus velezensis (strain DSM 23117 / BGSC 10A6 / LMG 26770 / FZB42) (Bacillus amyloliquefaciens subsp. plantarum).